The following is a 664-amino-acid chain: Bifunctional 3-dehydroquinate synthase/phosphatase (664 aa).

Residues 1-352 are 3-dehydroquinate synthase; that stretch reads MKKIFDDIYV…KIIDKYKNNF (352 aa). Residues 61 to 66, 95 to 99, 119 to 120, K132, K141, and 159 to 162 contribute to the NAD(+) site; these read DGEEYK, GVICD, TS, and FLKT. Zn(2+)-binding residues include E174, H238, and H255. The interval 353–664 is GPPA/PPX; it reads LRASIDIGTN…GAILEGVENK (312 aa).

It in the N-terminal section; belongs to the sugar phosphate cyclases superfamily. Dehydroquinate synthase family. This sequence in the C-terminal section; belongs to the GppA/Ppx family. In terms of assembly, monomer. NAD(+) is required as a cofactor. Co(2+) serves as cofactor. The cofactor is Zn(2+).

Its subcellular location is the cytoplasm. The enzyme catalyses 7-phospho-2-dehydro-3-deoxy-D-arabino-heptonate = 3-dehydroquinate + phosphate. It functions in the pathway metabolic intermediate biosynthesis; chorismate biosynthesis; chorismate from D-erythrose 4-phosphate and phosphoenolpyruvate: step 2/7. This chain is Bifunctional 3-dehydroquinate synthase/phosphatase (aroB), found in Fusobacterium nucleatum subsp. nucleatum (strain ATCC 25586 / DSM 15643 / BCRC 10681 / CIP 101130 / JCM 8532 / KCTC 2640 / LMG 13131 / VPI 4355).